We begin with the raw amino-acid sequence, 115 residues long: Cyclin-dependent kinase 2-associated protein 1 (115 aa).

The segment at 20–25 (GSVHSP) is interaction with CDK2AP2. Serine 46 bears the Phosphoserine; by IKKE mark.

Belongs to the CDK2AP family. In terms of assembly, homodimer. Component of the nucleosome remodeling and deacetylase (NuRD) repressor complex, composed of core proteins MTA1, MTA2, MTA3, RBBP4, RBBP7, HDAC1, HDAC2, MBD2, MBD3, and peripherally associated proteins CDK2AP1, CDK2AP2, GATAD2A, GATAD2B, CHD3, CHD4 and CHD5. The exact stoichiometry of the NuRD complex is unknown, and some subunits such as MBD2 and MBD3, GATAD2A and GATAD2B, and CHD3, CHD4 and CHD5 define mutually exclusive NuRD complexes. Interacts with monomeric unphosphorylated CDK2. Interacts with CDK2AP2. Interacts with GATAD2A. Interacts with HDAC1. Interacts with HDAC2. Interacts with MBD2. Interacts with MBD3. Interacts with RBBP4. Interacts with RBBP7. Phosphorylated in vitro by IKBKE at Ser-46.

The protein resides in the nucleus. It localises to the chromosome. Inhibitor of cyclin-dependent kinase CDK2. Also acts as a component of the histone deacetylase NuRD complex which participates in the remodeling of chromatin. This is Cyclin-dependent kinase 2-associated protein 1 (CDK2AP1) from Homo sapiens (Human).